We begin with the raw amino-acid sequence, 308 residues long: uncharacterized protein (308 aa).

Residues 11-87 (KRLDSLLASL…LKLEVLFEDK (77 aa)) form the S4 RNA-binding domain. Asp131 is a catalytic residue.

The protein belongs to the pseudouridine synthase RluA family.

It catalyses the reaction a uridine in RNA = a pseudouridine in RNA. This is an uncharacterized protein from Mycoplasma genitalium (strain ATCC 33530 / DSM 19775 / NCTC 10195 / G37) (Mycoplasmoides genitalium).